Here is a 1486-residue protein sequence, read N- to C-terminus: Chromosome partition protein MukB (1486 aa).

34-41 (GGNGAGKS) serves as a coordination point for ATP. 3 coiled-coil regions span residues 326-418 (LEAD…QYNQ), 444-480 (LETF…QAYQ), and 509-603 (RHLA…RAPV). The tract at residues 666–783 (PGGSEDQRLN…EVPLFGRAAR (118 aa)) is flexible hinge. Coiled-coil stretches lie at residues 835 to 923 (EAEI…AKLE), 977 to 1115 (EMLS…TAKA), and 1209 to 1266 (VEAI…QNVS).

The protein belongs to the SMC family. MukB subfamily. As to quaternary structure, homodimerization via its hinge domain. Binds to DNA via its C-terminal region. Interacts, and probably forms a ternary complex, with MukE and MukF via its C-terminal region. The complex formation is stimulated by calcium or magnesium. Interacts with tubulin-related protein FtsZ.

The protein resides in the cytoplasm. It is found in the nucleoid. In terms of biological role, plays a central role in chromosome condensation, segregation and cell cycle progression. Functions as a homodimer, which is essential for chromosome partition. Involved in negative DNA supercoiling in vivo, and by this means organize and compact chromosomes. May achieve or facilitate chromosome segregation by condensation DNA from both sides of a centrally located replisome during cell division. The sequence is that of Chromosome partition protein MukB from Escherichia coli (strain 55989 / EAEC).